The sequence spans 287 residues: Uroplakin-3a (287 aa).

Positions 1–18 (MLLLWALLALGCLRCGWT) are cleaved as a signal peptide. At 19-207 (VNLQPQLASV…DTWPGRRSGG (189 aa)) the chain is on the lumenal side. Residues Asn74, Asn139, and Asn170 are each glycosylated (N-linked (GlcNAc...) asparagine). Residues 208 to 235 (MIVITSILGSLPFFLLVGFAGAIILSFV) form a helical membrane-spanning segment. Topologically, residues 236 to 287 (DMGSSDGEMTHDSQITQEAVPKTLGTSEPSYSSVNRGPPLDRAEVFSSKLQD) are cytoplasmic. A disordered region spans residues 243–287 (EMTHDSQITQEAVPKTLGTSEPSYSSVNRGPPLDRAEVFSSKLQD). Residues 259–270 (LGTSEPSYSSVN) are compositionally biased toward polar residues.

The protein belongs to the uroplakin-3 family. In terms of assembly, heterodimer with uroplakin-1B (UPK1B).

Its subcellular location is the endoplasmic reticulum membrane. Its function is as follows. Component of the asymmetric unit membrane (AUM); a highly specialized biomembrane elaborated by terminally differentiated urothelial cells. May play an important role in AUM-cytoskeleton interaction in terminally differentiated urothelial cells. It also contributes to the formation of urothelial glycocalyx which may play an important role in preventing bacterial adherence. This Mus musculus (Mouse) protein is Uroplakin-3a (Upk3a).